Here is a 280-residue protein sequence, read N- to C-terminus: MRIAFTKMHGNGNDFVLIDEFEGVIVGEEEKPRFVRAVCHRNFGVGADGALFVQPSQKADVRFRYFNSDGSEAAMCGNGIRCFSRYVVEEGYAGERLRVETLAGILELEVKRENGWWVKVDMGKPKFGREEIPAKTDVWGYEVEHDGRKFRIYAANTGVPHVAVFVDSLDFDIVPLARKIRYSEIFPEGTNVNFAKVDGDTITVRTYERGVEGETLSCGTGSVAVAAIANRLGLTGSKVDVVTKGGLLKIELTEDTAYMTGGASRVFDGILRLNELRYDI.

Positions 13 and 67 each coordinate substrate. Cys76 functions as the Proton donor in the catalytic mechanism. Residues 77-78 (GN), Asn191, and 208-209 (ER) each bind substrate. Residue Cys218 is the Proton acceptor of the active site. 219–220 (GT) lines the substrate pocket.

The protein belongs to the diaminopimelate epimerase family. In terms of assembly, homodimer.

It is found in the cytoplasm. It catalyses the reaction (2S,6S)-2,6-diaminopimelate = meso-2,6-diaminopimelate. The protein operates within amino-acid biosynthesis; L-lysine biosynthesis via DAP pathway; DL-2,6-diaminopimelate from LL-2,6-diaminopimelate: step 1/1. In terms of biological role, catalyzes the stereoinversion of LL-2,6-diaminopimelate (L,L-DAP) to meso-diaminopimelate (meso-DAP), a precursor of L-lysine. The protein is Diaminopimelate epimerase of Archaeoglobus fulgidus (strain ATCC 49558 / DSM 4304 / JCM 9628 / NBRC 100126 / VC-16).